We begin with the raw amino-acid sequence, 46 residues long: uncharacterized protein (46 aa).

The helical transmembrane segment at 12–34 threads the bilayer; the sequence is HFNHFVIALSFIYGLTELGYLLL.

It localises to the cell membrane. This is an uncharacterized protein from Bacillus subtilis (strain 168).